The primary structure comprises 296 residues: N-acetylmuramic acid 6-phosphate etherase 2 (296 aa).

The SIS domain occupies 55-218 (IVANFKAGGR…STASMVGIGK (164 aa)). Glutamate 83 acts as the Proton donor in catalysis. Glutamate 114 is a catalytic residue.

The protein belongs to the GCKR-like family. MurNAc-6-P etherase subfamily. Homodimer.

It catalyses the reaction N-acetyl-D-muramate 6-phosphate + H2O = N-acetyl-D-glucosamine 6-phosphate + (R)-lactate. It participates in amino-sugar metabolism; N-acetylmuramate degradation. Specifically catalyzes the cleavage of the D-lactyl ether substituent of MurNAc 6-phosphate, producing GlcNAc 6-phosphate and D-lactate. The polypeptide is N-acetylmuramic acid 6-phosphate etherase 2 (Lactiplantibacillus plantarum (strain ATCC BAA-793 / NCIMB 8826 / WCFS1) (Lactobacillus plantarum)).